The chain runs to 75 residues: Xibalbin-13 2 (75 aa).

Positions 1-27 are cleaved as a signal peptide; it reads MKEANTRRYIYLCLVVVLLSIIITTEA. The propeptide occupies 28–30; it reads EDD. 4 cysteine pairs are disulfide-bonded: C34/C49, C41/C54, C48/C65, and C56/C63.

Belongs to the xibalbin-13 family. Expressed by the venom gland and the whole body.

It is found in the secreted. Its function is as follows. Probable neurotoxin. Strongly inhibits voltage-gated potassium channels (Kv1.1/KCNA1, Kv1.2/KCNA2, Kv1.3/KCNA3, and Kv1.6/KCNA6, with the highest toxicity against Kv1.1 (85.1% inhibition at 1 uM)) and mildly inhibits sodium channels (Nav1.2/SCN2A, Nav1.4/SCN4A, Nav1.5/SCN5A, Nav1.6/SCN8A, and BgNav). Induces activation of protein kinase A type II (PKA-II) and MAP kinase Erk1/2 in primary nociceptive and non-nociceptive sensory neurons. Does not show cytotoxic activity. Does not have an impact on Ca2+, cAMP, and NO signaling in the cell types analyzed. Does not interfere with the adhesion of leukocytes to endothelial cells. In Xibalbanus tulumensis (Blind cave remipede), this protein is Xibalbin-13 2.